A 106-amino-acid polypeptide reads, in one-letter code: UPF0060 membrane protein Mrad2831_0929 (106 aa).

A run of 4 helical transmembrane segments spans residues 3–23, 30–50, 59–79, and 87–104; these read LLAYAAAALAEIAGCFAFWAW, AWWTLPGLASLAAFAALLTLV, FAAYGGVYVAASVLWLWLAEG, and LAGSAVCLAGTALILLGR.

This sequence belongs to the UPF0060 family.

The protein resides in the cell inner membrane. This is UPF0060 membrane protein Mrad2831_0929 from Methylobacterium radiotolerans (strain ATCC 27329 / DSM 1819 / JCM 2831 / NBRC 15690 / NCIMB 10815 / 0-1).